A 130-amino-acid chain; its full sequence is Anti-adapter protein IraD (130 aa).

This sequence belongs to the GpW/Gp25 family. IraD subfamily. Interacts with RssB.

It localises to the cytoplasm. Functionally, inhibits RpoS proteolysis by regulating RssB activity, thereby increasing the stability of the sigma stress factor RpoS during oxidative stress. Its effect on RpoS stability is due to its interaction with RssB, which probably blocks the interaction of RssB with RpoS, and the consequent delivery of the RssB-RpoS complex to the ClpXP protein degradation pathway. The protein is Anti-adapter protein IraD of Escherichia coli O9:H4 (strain HS).